Reading from the N-terminus, the 216-residue chain is Pyrophosphatase PpaX (216 aa).

Asp-9 (nucleophile) is an active-site residue.

It belongs to the HAD-like hydrolase superfamily. PpaX family. It depends on Mg(2+) as a cofactor.

It carries out the reaction diphosphate + H2O = 2 phosphate + H(+). Functionally, hydrolyzes pyrophosphate formed during P-Ser-HPr dephosphorylation by HPrK/P. Might play a role in controlling the intracellular pyrophosphate pool. The chain is Pyrophosphatase PpaX from Bacillus cereus (strain Q1).